Reading from the N-terminus, the 240-residue chain is Sec-independent protein translocase protein TatC (240 aa).

Transmembrane regions (helical) follow at residues 15 to 35, 61 to 81, 103 to 123, 152 to 172, 191 to 211, and 212 to 232; these read IISI…AKYV, LFIL…PVIL, LLLG…FIVL, FVLK…VLYV, FIVI…TQVL, and MAIP…LATR.

This sequence belongs to the TatC family. Forms a complex with TatA.

The protein resides in the cell inner membrane. In terms of biological role, part of the twin-arginine translocation (Tat) system that transports large folded proteins containing a characteristic twin-arginine motif in their signal peptide across membranes. The sequence is that of Sec-independent protein translocase protein TatC from Aquifex aeolicus (strain VF5).